We begin with the raw amino-acid sequence, 734 residues long: Photosystem I P700 chlorophyll a apoprotein A2 (734 aa).

Transmembrane regions (helical) follow at residues 46-69 (IFASHFGQLAIIFLWTSGNLFHVA), 135-158 (LYTGALFLLFLSAVSLIAGWLHLQ), 175-199 (LNHHLSGLFGVSSLAWTGHLVHVAI), 273-291 (IAHHHLAIALIFLVAGHMY), 330-353 (VHFQLGLALASLGVITSLVAQHMY), 369-395 (AALYTHHQYIAGFIMTGAFAHGAIFFI), 417-439 (AIISHLSWASLFLGFHTLGLYVH), and 517-535 (FLVHHAIALGLHTTTLILV). The [4Fe-4S] cluster site is built by Cys559 and Cys568. 2 consecutive transmembrane segments (helical) span residues 575–596 (AFYLAVFWMLNTIGWVTFYWHW) and 643–665 (LSVWAWMFLFGHLVWATGFMFLI). His654, Met662, and Tyr670 together coordinate chlorophyll a. Trp671 lines the phylloquinone pocket. The helical transmembrane segment at 707–727 (LVGLAHFSVGYIFTYAAFLIA) threads the bilayer.

This sequence belongs to the PsaA/PsaB family. The PsaA/B heterodimer binds the P700 chlorophyll special pair and subsequent electron acceptors. PSI consists of a core antenna complex that captures photons, and an electron transfer chain that converts photonic excitation into a charge separation. The eukaryotic PSI reaction center is composed of at least 11 subunits. It depends on P700 is a chlorophyll a/chlorophyll a' dimer, A0 is one or more chlorophyll a, A1 is one or both phylloquinones and FX is a shared 4Fe-4S iron-sulfur center. as a cofactor.

Its subcellular location is the plastid. It is found in the chloroplast thylakoid membrane. The enzyme catalyses reduced [plastocyanin] + hnu + oxidized [2Fe-2S]-[ferredoxin] = oxidized [plastocyanin] + reduced [2Fe-2S]-[ferredoxin]. PsaA and PsaB bind P700, the primary electron donor of photosystem I (PSI), as well as the electron acceptors A0, A1 and FX. PSI is a plastocyanin-ferredoxin oxidoreductase, converting photonic excitation into a charge separation, which transfers an electron from the donor P700 chlorophyll pair to the spectroscopically characterized acceptors A0, A1, FX, FA and FB in turn. Oxidized P700 is reduced on the lumenal side of the thylakoid membrane by plastocyanin. This is Photosystem I P700 chlorophyll a apoprotein A2 from Platanus occidentalis (Sycamore).